The primary structure comprises 316 residues: Delta(1)-pyrroline-2-carboxylate reductase (316 aa).

This sequence belongs to the ornithine cyclodeaminase/mu-crystallin family. Homodimer.

It catalyses the reaction L-proline + NAD(+) = 1-pyrroline-2-carboxylate + NADH + H(+). The enzyme catalyses L-proline + NADP(+) = 1-pyrroline-2-carboxylate + NADPH + H(+). Its function is as follows. Catalyzes the reduction of Delta(1)-pyrroline-2-carboxylate (Pyr2C) to L-proline, using preferentially NADPH over NADH as the electron donor. Together with LhpH, is involved in a metabolic pathway that converts trans-3-hydroxy-L-proline (t3LHyp) to L-proline. To a much lesser extent, can also reduce Delta(1)-piperideine-2-carboxylate (Pip2C) to L-pipecolate in vitro; however, this activity has likely no physiological significance in vivo since C.psychrerythraea probably possesses no ability to metabolize D-lysine via the L-pipecolate pathway. Does not show ornithine cyclodeaminase (OCD) activity. The polypeptide is Delta(1)-pyrroline-2-carboxylate reductase (Colwellia psychrerythraea (strain 34H / ATCC BAA-681) (Vibrio psychroerythus)).